Reading from the N-terminus, the 87-residue chain is Small ribosomal subunit protein bS20 (87 aa).

A disordered region spans residues 1-29 (MANTAQARKRARQAVKQNAHNSSQRSTLR). Positions 20–29 (HNSSQRSTLR) are enriched in polar residues.

The protein belongs to the bacterial ribosomal protein bS20 family.

Its function is as follows. Binds directly to 16S ribosomal RNA. This is Small ribosomal subunit protein bS20 from Janthinobacterium sp. (strain Marseille) (Minibacterium massiliensis).